The chain runs to 282 residues: Undecaprenyl-diphosphatase (282 aa).

The next 7 membrane-spanning stretches (helical) occupy residues Ala-45 to Ile-65, Trp-86 to Leu-106, Phe-114 to Ile-134, Leu-151 to Thr-171, Phe-196 to Leu-216, Gly-224 to Ile-244, and Phe-256 to Phe-276.

Belongs to the UppP family.

It localises to the cell membrane. It carries out the reaction di-trans,octa-cis-undecaprenyl diphosphate + H2O = di-trans,octa-cis-undecaprenyl phosphate + phosphate + H(+). Functionally, catalyzes the dephosphorylation of undecaprenyl diphosphate (UPP). Confers resistance to bacitracin. The polypeptide is Undecaprenyl-diphosphatase (Streptococcus gordonii (strain Challis / ATCC 35105 / BCRC 15272 / CH1 / DL1 / V288)).